Reading from the N-terminus, the 384-residue chain is ATP synthase subunit a (384 aa).

The interval 22–60 (PAPAAAPVEQHGAPAPEAAAPDAHAAPAGEHGAAVEAHA) is disordered. The next 6 membrane-spanning stretches (helical) occupy residues 131–151 (KHVM…LAAV), 189–209 (FVPY…FGLI), 218–238 (NLSV…YAAI), 258–278 (LAPL…TKPF), 293–313 (FVIL…VAFG), and 319–339 (LGIF…FTML). Residues 355–384 (HGHAEEHGHAGPGMGSEHGSHVAGASPGHG) are disordered.

Belongs to the ATPase A chain family. As to quaternary structure, F-type ATPases have 2 components, CF(1) - the catalytic core - and CF(0) - the membrane proton channel. CF(1) has five subunits: alpha(3), beta(3), gamma(1), delta(1), epsilon(1). CF(0) has three main subunits: a(1), b(2) and c(9-12). The alpha and beta chains form an alternating ring which encloses part of the gamma chain. CF(1) is attached to CF(0) by a central stalk formed by the gamma and epsilon chains, while a peripheral stalk is formed by the delta and b chains.

Its subcellular location is the cell inner membrane. In terms of biological role, key component of the proton channel; it plays a direct role in the translocation of protons across the membrane. In Anaeromyxobacter dehalogenans (strain 2CP-1 / ATCC BAA-258), this protein is ATP synthase subunit a.